The chain runs to 293 residues: Transcriptional regulator ICP22 homolog (293 aa).

2 disordered regions span residues 1-49 (MPHG…QRID) and 175-293 (RFLE…SARR). A compositionally biased stretch (low complexity) spans 21 to 31 (TPSTSPLIPSL). Over residues 190–210 (EECDVSGDESPSEEEEEDEAS) the composition is skewed to acidic residues. A compositionally biased stretch (basic residues) spans 272–281 (AAKKRRKRQP). A compositionally biased stretch (basic and acidic residues) spans 282–293 (PKGERPTKSARR).

The protein belongs to the herpesviridae ICP22 family.

This chain is Transcriptional regulator ICP22 homolog (IR4), found in Equus caballus (Horse).